We begin with the raw amino-acid sequence, 356 residues long: Dihydroorotate dehydrogenase (quinone) (356 aa).

FMN is bound by residues 67 to 71 (PGFDK) and threonine 91. Lysine 71 lines the substrate pocket. Position 116 to 120 (116 to 120 (NRMGF)) interacts with substrate. FMN contacts are provided by asparagine 147 and asparagine 178. Residue asparagine 178 participates in substrate binding. Serine 181 functions as the Nucleophile in the catalytic mechanism. Substrate is bound at residue asparagine 183. Positions 218 and 246 each coordinate FMN. Residue 247-248 (NT) participates in substrate binding. FMN is bound by residues glycine 268, glycine 297, and 318–319 (YS).

This sequence belongs to the dihydroorotate dehydrogenase family. Type 2 subfamily. In terms of assembly, monomer. FMN serves as cofactor.

The protein resides in the cell membrane. It catalyses the reaction (S)-dihydroorotate + a quinone = orotate + a quinol. It functions in the pathway pyrimidine metabolism; UMP biosynthesis via de novo pathway; orotate from (S)-dihydroorotate (quinone route): step 1/1. Its function is as follows. Catalyzes the conversion of dihydroorotate to orotate with quinone as electron acceptor. The sequence is that of Dihydroorotate dehydrogenase (quinone) from Sphingopyxis alaskensis (strain DSM 13593 / LMG 18877 / RB2256) (Sphingomonas alaskensis).